We begin with the raw amino-acid sequence, 252 residues long: uncharacterized protein (252 aa).

The first 22 residues, 1–22, serve as a signal peptide directing secretion; the sequence is MIHSKRLRLWLYLVLLAVFISA. Cys23 carries the N-palmitoyl cysteine lipid modification. Residue Cys23 is the site of S-diacylglycerol cysteine attachment.

This sequence belongs to the staphylococcal tandem lipoprotein family.

The protein resides in the cell membrane. This is an uncharacterized protein from Staphylococcus aureus (strain MW2).